The sequence spans 84 residues: MFNMENSAAKEKTAARQQLFDLEQDMHDLTKAHEINTNVQSKVQKVTASLREGASKESFEKQHTLLAGYVALQKVLGRINRKMV.

It belongs to the chlamydial CPn_0711/CT_665/TC_0036 family.

This is an uncharacterized protein from Chlamydia muridarum (strain MoPn / Nigg).